We begin with the raw amino-acid sequence, 183 residues long: UPF0397 protein VSAL_I1988 (183 aa).

5 helical membrane-spanning segments follow: residues 8–28, 41–61, 74–94, 110–130, and 147–167; these read VVVI…MFGI, AVLA…VGFI, VWLT…LFPI, FFIF…TSAF, and LCII…FILT.

The protein belongs to the UPF0397 family.

The protein resides in the cell membrane. The protein is UPF0397 protein VSAL_I1988 of Aliivibrio salmonicida (strain LFI1238) (Vibrio salmonicida (strain LFI1238)).